A 143-amino-acid chain; its full sequence is Hemoglobin subunit alpha-1 (143 aa).

Serine 2 is subject to N-acetylserine. Residues 2 to 143 (SLTAKDKDTV…LSRALAEKYR (142 aa)) form the Globin domain. Residue histidine 60 coordinates O2. Residue histidine 89 coordinates heme b.

This sequence belongs to the globin family. In terms of assembly, hb1 is a heterotetramer of two alpha-1 chains and two beta-1 chains. As to expression, red blood cells.

In terms of biological role, involved in oxygen transport from gills to the various peripheral tissues. The protein is Hemoglobin subunit alpha-1 (hba1) of Anarhichas minor (Arctic spotted wolffish).